The following is a 352-amino-acid chain: uncharacterized protein (352 aa).

The tract at residues 1–40 (MTSTMKLFTDHAEISVRERPPQRNNNNQEQDNSNRPAPRR) is disordered. Residues 8–21 (FTDHAEISVRERPP) show a composition bias toward basic and acidic residues. Residues 22-36 (QRNNNNQEQDNSNRP) are compositionally biased toward low complexity. A helical transmembrane segment spans residues 317–333 (MTITLPCGLTIAFFVYY).

It localises to the host cell membrane. This is an uncharacterized protein from Diadromus pulchellus idnoreovirus 1 (DpIRV-1).